Here is a 314-residue protein sequence, read N- to C-terminus: Probable carboxylesterase 2 (314 aa).

The Involved in the stabilization of the negatively charged intermediate by the formation of the oxyanion hole signature appears at 79–81 (HGG). Active-site residues include Ser158, Asp254, and His286.

It belongs to the 'GDXG' lipolytic enzyme family. In terms of tissue distribution, expressed in roots and flowers.

It carries out the reaction a carboxylic ester + H2O = an alcohol + a carboxylate + H(+). Its function is as follows. Carboxylesterase acting on esters with varying acyl chain length. The protein is Probable carboxylesterase 2 (CXE2) of Arabidopsis thaliana (Mouse-ear cress).